A 528-amino-acid polypeptide reads, in one-letter code: Putative pumilio homolog 10 (528 aa).

The region spanning 188-528 is the PUM-HD domain; sequence EGSGASYPDE…KIFSKTILKK (341 aa). Pumilio repeat units follow at residues 213–248, 249–284, 285–323, 325–360, 361–396, 397–433, 434–465, and 466–503; these read EIYGSVNLMARDQIGCRALQKLVEEGTVLDSKVIFL, EIIDHVVELSMDPLGNYIVQKLLVVSDEEQRTMIVS, VLTSKPRELIKICLNTNGTRVIQKMIKTVKTKQQIALVK, ALEPGFLVLVNDSNGYHVLQSCLEFLVPNDNKFVVE, AATEYCAQLATHQYGCYVLQCSLINTVGLQHERLVA, EISRDSLRLSQDPFGNYVVQCLIDQQVSSVNLLLPFR, THCIELATQKFSSHVIEKCLRKYPESRAEIVR, and ELLSYPNFEQLLQDPYANYVIQTALSVTKGAVRARLVE.

The protein resides in the cytoplasm. Its function is as follows. Sequence-specific RNA-binding protein that regulates translation and mRNA stability by binding the 3'-UTR of target mRNAs. The chain is Putative pumilio homolog 10 (APUM10) from Arabidopsis thaliana (Mouse-ear cress).